Consider the following 350-residue polypeptide: Small ribosomal subunit biogenesis GTPase RsgA (350 aa).

Polar residues predominate over residues methionine 1–asparagine 17. Positions methionine 1–aspartate 33 are disordered. Residues threonine 104–phenylalanine 273 enclose the CP-type G domain. GTP-binding positions include asparagine 160 to aspartate 163 and glycine 214 to serine 222. Zn(2+) contacts are provided by cysteine 297, cysteine 302, histidine 304, and cysteine 310.

This sequence belongs to the TRAFAC class YlqF/YawG GTPase family. RsgA subfamily. Monomer. Associates with 30S ribosomal subunit, binds 16S rRNA. Requires Zn(2+) as cofactor.

The protein localises to the cytoplasm. Functionally, one of several proteins that assist in the late maturation steps of the functional core of the 30S ribosomal subunit. Helps release RbfA from mature subunits. May play a role in the assembly of ribosomal proteins into the subunit. Circularly permuted GTPase that catalyzes slow GTP hydrolysis, GTPase activity is stimulated by the 30S ribosomal subunit. The chain is Small ribosomal subunit biogenesis GTPase RsgA from Shigella flexneri.